A 184-amino-acid polypeptide reads, in one-letter code: Large ribosomal subunit protein uL22B (184 aa).

Lys-46 is covalently cross-linked (Glycyl lysine isopeptide (Lys-Gly) (interchain with G-Cter in ubiquitin)). The residue at position 70 (Thr-70) is a Phosphothreonine.

This sequence belongs to the universal ribosomal protein uL22 family. Component of the large ribosomal subunit (LSU). Mature yeast ribosomes consist of a small (40S) and a large (60S) subunit. The 40S small subunit contains 1 molecule of ribosomal RNA (18S rRNA) and 33 different proteins (encoded by 57 genes). The large 60S subunit contains 3 rRNA molecules (25S, 5.8S and 5S rRNA) and 46 different proteins (encoded by 81 genes). uL22 is associated with the polypeptide exit tunnel.

It is found in the cytoplasm. Component of the ribosome, a large ribonucleoprotein complex responsible for the synthesis of proteins in the cell. The small ribosomal subunit (SSU) binds messenger RNAs (mRNAs) and translates the encoded message by selecting cognate aminoacyl-transfer RNA (tRNA) molecules. The large subunit (LSU) contains the ribosomal catalytic site termed the peptidyl transferase center (PTC), which catalyzes the formation of peptide bonds, thereby polymerizing the amino acids delivered by tRNAs into a polypeptide chain. The nascent polypeptides leave the ribosome through a tunnel in the LSU and interact with protein factors that function in enzymatic processing, targeting, and the membrane insertion of nascent chains at the exit of the ribosomal tunnel. In Saccharomyces cerevisiae (strain ATCC 204508 / S288c) (Baker's yeast), this protein is Large ribosomal subunit protein uL22B.